A 352-amino-acid polypeptide reads, in one-letter code: Histidinol-phosphate aminotransferase (352 aa).

At Lys221 the chain carries N6-(pyridoxal phosphate)lysine.

The protein belongs to the class-II pyridoxal-phosphate-dependent aminotransferase family. Histidinol-phosphate aminotransferase subfamily. As to quaternary structure, homodimer. It depends on pyridoxal 5'-phosphate as a cofactor.

The enzyme catalyses L-histidinol phosphate + 2-oxoglutarate = 3-(imidazol-4-yl)-2-oxopropyl phosphate + L-glutamate. It functions in the pathway amino-acid biosynthesis; L-histidine biosynthesis; L-histidine from 5-phospho-alpha-D-ribose 1-diphosphate: step 7/9. In Staphylococcus aureus (strain MSSA476), this protein is Histidinol-phosphate aminotransferase.